The sequence spans 310 residues: MRIVFAGTPEFAAEHLKALLDSPYEIVAVYTQPDRPAGRGQKLMPSAVKALAVAHDIPVFQPQTLRNADAQAELAALKPDLMVVVAYGLILPQVVLDIPRLGCINSHASLLPRWRGAAPIQRAVEAGDAESGVTVMRMEAGLDTGPMLLKVVTPISAEDTGGTLHDRLAEMGPPAVVQAIAGLADGSLQGEIQDDALATYAHKLNKDEARIDWTRPAVELERLIRAFNPWPVCHSMLDGESVKVLAANLSTGQGAPGEILSASKDGLVVACGDQALSLTRLQLPGGKALSFSDLFNSRREKFAAGKVLGQ.

(6S)-5,6,7,8-tetrahydrofolate is bound at residue 109–112 (SLLP).

It belongs to the Fmt family.

It catalyses the reaction L-methionyl-tRNA(fMet) + (6R)-10-formyltetrahydrofolate = N-formyl-L-methionyl-tRNA(fMet) + (6S)-5,6,7,8-tetrahydrofolate + H(+). Attaches a formyl group to the free amino group of methionyl-tRNA(fMet). The formyl group appears to play a dual role in the initiator identity of N-formylmethionyl-tRNA by promoting its recognition by IF2 and preventing the misappropriation of this tRNA by the elongation apparatus. This Pseudomonas putida (strain ATCC 700007 / DSM 6899 / JCM 31910 / BCRC 17059 / LMG 24140 / F1) protein is Methionyl-tRNA formyltransferase.